A 247-amino-acid polypeptide reads, in one-letter code: Large ribosomal subunit protein uL30 (247 aa).

The protein belongs to the universal ribosomal protein uL30 family.

The polypeptide is Large ribosomal subunit protein uL30 (RPL7L1) (Sus scrofa (Pig)).